Reading from the N-terminus, the 200-residue chain is NADH-quinone oxidoreductase subunit C (200 aa).

This sequence belongs to the complex I 30 kDa subunit family. NDH-1 is composed of 14 different subunits. Subunits NuoB, C, D, E, F, and G constitute the peripheral sector of the complex.

It localises to the cell inner membrane. It carries out the reaction a quinone + NADH + 5 H(+)(in) = a quinol + NAD(+) + 4 H(+)(out). Its function is as follows. NDH-1 shuttles electrons from NADH, via FMN and iron-sulfur (Fe-S) centers, to quinones in the respiratory chain. The immediate electron acceptor for the enzyme in this species is believed to be ubiquinone. Couples the redox reaction to proton translocation (for every two electrons transferred, four hydrogen ions are translocated across the cytoplasmic membrane), and thus conserves the redox energy in a proton gradient. In Burkholderia vietnamiensis (strain G4 / LMG 22486) (Burkholderia cepacia (strain R1808)), this protein is NADH-quinone oxidoreductase subunit C.